Consider the following 103-residue polypeptide: MSGRGKGGKGLGKGGAKRHRKVLRDNIQGITKPAIRRLARRGGVKRISGLIYEETRTVLKNFLENVIRDSVTYTEHARRKTVTAMDVVYALKRQGRTLYGFGG.

Over residues 1 to 14 (MSGRGKGGKGLGKG) the composition is skewed to gly residues. The tract at residues 1–20 (MSGRGKGGKGLGKGGAKRHR) is disordered. The DNA-binding element occupies 17–21 (KRHRK).

This sequence belongs to the histone H4 family. In terms of assembly, the nucleosome is a histone octamer containing two molecules each of H2A, H2B, H3 and H4 assembled in one H3-H4 heterotetramer and two H2A-H2B heterodimers. The octamer wraps approximately 147 bp of DNA.

Its subcellular location is the nucleus. The protein resides in the chromosome. In terms of biological role, core component of nucleosome. Nucleosomes wrap and compact DNA into chromatin, limiting DNA accessibility to the cellular machineries which require DNA as a template. Histones thereby play a central role in transcription regulation, DNA repair, DNA replication and chromosomal stability. DNA accessibility is regulated via a complex set of post-translational modifications of histones, also called histone code, and nucleosome remodeling. This chain is Histone H4 (H4-I), found in Volvox carteri (Green alga).